A 140-amino-acid polypeptide reads, in one-letter code: Large ribosomal subunit protein uL11 (140 aa).

This sequence belongs to the universal ribosomal protein uL11 family. As to quaternary structure, part of the ribosomal stalk of the 50S ribosomal subunit. Interacts with L10 and the large rRNA to form the base of the stalk. L10 forms an elongated spine to which L12 dimers bind in a sequential fashion forming a multimeric L10(L12)X complex. In terms of processing, one or more lysine residues are methylated.

Functionally, forms part of the ribosomal stalk which helps the ribosome interact with GTP-bound translation factors. The chain is Large ribosomal subunit protein uL11 from Brachyspira hyodysenteriae (strain ATCC 49526 / WA1).